Consider the following 526-residue polypeptide: Cholesterol side-chain cleavage enzyme, mitochondrial (526 aa).

Residues 1 to 36 (MLAKGLCLRSVLVKSCQPFLSPVWQGPGLATGNGAG) constitute a mitochondrion transit peptide. Cys-459 lines the heme pocket.

Belongs to the cytochrome P450 family. As to quaternary structure, interacts with FDX1/adrenodoxin. The cofactor is heme. As to expression, expressed in the kidney where it localizes to the distal convoluted tubule and the thick ascending limb of the loop of Henle (at protein level). In the ovary, highly expressed in interstitial cells (at protein level). Also expressed in adrenal gland and testis.

The protein resides in the mitochondrion inner membrane. It catalyses the reaction 6 reduced [adrenodoxin] + cholesterol + 3 O2 + 6 H(+) = 4-methylpentanal + pregnenolone + 6 oxidized [adrenodoxin] + 4 H2O. The catalysed reaction is 2 reduced [adrenodoxin] + cholesterol + O2 + 2 H(+) = (22R)-hydroxycholesterol + 2 oxidized [adrenodoxin] + H2O. The enzyme catalyses (22R)-hydroxycholesterol + 2 reduced [adrenodoxin] + O2 + 2 H(+) = (20R,22R)-20,22-dihydroxycholesterol + 2 oxidized [adrenodoxin] + H2O. It carries out the reaction (20R,22R)-20,22-dihydroxycholesterol + 2 reduced [adrenodoxin] + O2 + 2 H(+) = 4-methylpentanal + pregnenolone + 2 oxidized [adrenodoxin] + 2 H2O. It functions in the pathway lipid metabolism; C21-steroid hormone metabolism. It participates in steroid metabolism; cholesterol metabolism. A cytochrome P450 monooxygenase that catalyzes the side-chain hydroxylation and cleavage of cholesterol to pregnenolone, the precursor of most steroid hormones. Catalyzes three sequential oxidation reactions of cholesterol, namely the hydroxylation at C22 followed with the hydroxylation at C20 to yield 20R,22R-hydroxycholesterol that is further cleaved between C20 and C22 to yield the C21-steroid pregnenolone and 4-methylpentanal. Mechanistically, uses molecular oxygen inserting one oxygen atom into a substrate and reducing the second into a water molecule. Two electrons are provided by NADPH via a two-protein mitochondrial transfer system comprising flavoprotein FDXR (adrenodoxin/ferredoxin reductase) and nonheme iron-sulfur protein FDX1 or FDX2 (adrenodoxin/ferredoxin). The chain is Cholesterol side-chain cleavage enzyme, mitochondrial from Rattus norvegicus (Rat).